The following is a 235-amino-acid chain: Ribonuclease HII (235 aa).

Residues 23-212 (GLVAGVDEAG…VAHVVSIARM (190 aa)) enclose the RNase H type-2 domain. 3 residues coordinate a divalent metal cation: aspartate 29, glutamate 30, and aspartate 121.

The protein belongs to the RNase HII family. It depends on Mn(2+) as a cofactor. The cofactor is Mg(2+).

Its subcellular location is the cytoplasm. The catalysed reaction is Endonucleolytic cleavage to 5'-phosphomonoester.. Its function is as follows. Endonuclease that specifically degrades the RNA of RNA-DNA hybrids. The protein is Ribonuclease HII of Delftia acidovorans (strain DSM 14801 / SPH-1).